The following is a 381-amino-acid chain: Tryptophan--tRNA ligase (381 aa).

Positions 82-90 match the 'HIGH' region motif; it reads PSLGMHIGH. Residues 254-258 carry the 'KMSKS' region motif; that stretch reads KMSSS.

The protein belongs to the class-I aminoacyl-tRNA synthetase family.

It is found in the cytoplasm. It carries out the reaction tRNA(Trp) + L-tryptophan + ATP = L-tryptophyl-tRNA(Trp) + AMP + diphosphate + H(+). The chain is Tryptophan--tRNA ligase from Sulfolobus acidocaldarius (strain ATCC 33909 / DSM 639 / JCM 8929 / NBRC 15157 / NCIMB 11770).